The sequence spans 92 residues: Small ribosomal subunit protein uS19 (92 aa).

It belongs to the universal ribosomal protein uS19 family.

In terms of biological role, protein S19 forms a complex with S13 that binds strongly to the 16S ribosomal RNA. The chain is Small ribosomal subunit protein uS19 from Cereibacter sphaeroides (strain ATCC 17029 / ATH 2.4.9) (Rhodobacter sphaeroides).